A 1033-amino-acid polypeptide reads, in one-letter code: Complement receptor type 2 (1033 aa).

The signal sequence occupies residues 1 to 20; it reads MGAAGLLGVFLALVAPGVLG. Sushi domains are found at residues 21–84, 89–148, 152–212, 213–273, 274–344, 349–408, 409–468, 469–524, 525–595, 600–659, 660–716, 717–781, 786–845, 849–909, and 910–970; these read ISCG…KCEY, SSCP…TCVS, LECP…TCEE, ARCK…VCEE, IFCP…RCEL, VQCP…VCEK, ECQA…QCKV, AACE…LCKE, ITCP…LCKL, VQCS…VCEK, ETCQ…LCKV, IHCH…QCLR, TRCP…TCIK, IGCP…HCKE, and VNCS…VCRS. At 21–971 the chain is on the extracellular side; the sequence is ISCGSPPPIL…NPPLAVCRSR (951 aa). Disulfide bonds link C23–C65, C51–C82, C91–C132, C118–C146, C154–C197, C183–C210, C215–C256, C242–C271, C276–C325, C305–C342, C351–C393, C379–C406, C410–C453, C439–C466, C471–C509, C495–C522, C527–C576, C556–C593, C602–C644, C630–C657, C662–C699, C685–C714, C719–C762, C748–C779, C788–C830, C816–C843, C851–C894, and C880–C907. N121 and N127 each carry an N-linked (GlcNAc...) asparagine glycan. N-linked (GlcNAc...) asparagine glycosylation occurs at N294. The N-linked (GlcNAc...) asparagine glycan is linked to N372. The N-linked (GlcNAc...) asparagine glycan is linked to N492. N623 carries an N-linked (GlcNAc...) asparagine glycan. N682 carries an N-linked (GlcNAc...) asparagine glycan. N-linked (GlcNAc...) asparagine glycosylation is found at N800, N823, and N861. A glycan (N-linked (GlcNAc...) asparagine) is linked at N911. Intrachain disulfides connect C912–C955 and C941–C968. Residues 972–999 traverse the membrane as a helical segment; it reads SLAPVLCGIAAGLILLTFLIVITLYVIS. Over 1000–1033 the chain is Cytoplasmic; sequence KHRARNYYTDTSQKEAFHLEAREVYSVDPYNPAS.

This sequence belongs to the receptors of complement activation (RCA) family. In terms of assembly, interacts (via Sushi domain 1 and 2) with C3. Interacts with CD19. Part of a complex composed of CD19, CR2/CD21, CD81 and IFITM1/CD225 in the membrane of mature B-cells. Interacts (via Sushi domain 1 and 2) with FCER2 (via the C-terminus). Interacts with CD23. Interacts with FCRL5. Interacts with CR1. Interacts with INFNA1. (Microbial infection) Interacts with Epstein-Barr virus gp350 protein. In terms of tissue distribution, mature B-lymphocytes, T-lymphocytes, pharyngeal epithelial cells, astrocytes and follicular dendritic cells of the spleen.

The protein localises to the cell membrane. Its function is as follows. Serves as a receptor for various ligands including complement component CD3d, HNRNPU OR IFNA1. When C3d is bound to antigens, attaches to C3d on B-cell surface and thereby facilitates the recognition and uptake of antigens by B-cells. This interaction enhances B-cell activation and subsequent immune responses. Forms a complex with several partners on the surface of B-cells including CD19, FCRL5 and CD81, to form the B-cell coreceptor complex that plays a crucial role in B-cell activation and signaling. Also induces specific intracellular signaling separately from the BCR and CD19 by activating the tyrosine kinase SRC, which then phosphorylates nucleolin/NCL and triggers AKT and GSK3 kinase activities in a SYK/CD19-independent manner. Acts as a ligand for CD23 (FcepsilonRII), a low-affinity receptor for IgE, which is expressed on B-cells and other immune cells, and thus participates in the regulation of IgE production. (Microbial infection) Acts as a receptor for Epstein-Barr virus. The sequence is that of Complement receptor type 2 (CR2) from Homo sapiens (Human).